We begin with the raw amino-acid sequence, 317 residues long: tRNA dimethylallyltransferase (317 aa).

14-21 (GPTAVGKT) contacts ATP. Residue 16 to 21 (TAVGKT) coordinates substrate. Positions 39-42 (DSMQ) are interaction with substrate tRNA.

It belongs to the IPP transferase family. Monomer. Mg(2+) serves as cofactor.

The catalysed reaction is adenosine(37) in tRNA + dimethylallyl diphosphate = N(6)-dimethylallyladenosine(37) in tRNA + diphosphate. In terms of biological role, catalyzes the transfer of a dimethylallyl group onto the adenine at position 37 in tRNAs that read codons beginning with uridine, leading to the formation of N6-(dimethylallyl)adenosine (i(6)A). The protein is tRNA dimethylallyltransferase of Bacillus cereus (strain B4264).